Reading from the N-terminus, the 57-residue chain is uncharacterized protein (57 aa).

Residues Thr-34–Ala-51 form a helical membrane-spanning segment.

The protein localises to the membrane. This is an uncharacterized protein from Dictyostelium discoideum (Social amoeba).